We begin with the raw amino-acid sequence, 545 residues long: 2-succinyl-5-enolpyruvyl-6-hydroxy-3-cyclohexene-1-carboxylate synthase (545 aa).

Residues 170–185 (QVSGLQRSAPAPSSDS) show a composition bias toward polar residues. The interval 170 to 193 (QVSGLQRSAPAPSSDSPLGAAPQL) is disordered.

The protein belongs to the TPP enzyme family. MenD subfamily. Homodimer. Requires Mg(2+) as cofactor. Mn(2+) serves as cofactor. The cofactor is thiamine diphosphate.

It catalyses the reaction isochorismate + 2-oxoglutarate + H(+) = 5-enolpyruvoyl-6-hydroxy-2-succinyl-cyclohex-3-ene-1-carboxylate + CO2. Its pathway is quinol/quinone metabolism; 1,4-dihydroxy-2-naphthoate biosynthesis; 1,4-dihydroxy-2-naphthoate from chorismate: step 2/7. The protein operates within cofactor biosynthesis; phylloquinone biosynthesis. In terms of biological role, catalyzes the thiamine diphosphate-dependent decarboxylation of 2-oxoglutarate and the subsequent addition of the resulting succinic semialdehyde-thiamine pyrophosphate anion to isochorismate to yield 2-succinyl-5-enolpyruvyl-6-hydroxy-3-cyclohexene-1-carboxylate (SEPHCHC). In Parasynechococcus marenigrum (strain WH8102), this protein is 2-succinyl-5-enolpyruvyl-6-hydroxy-3-cyclohexene-1-carboxylate synthase.